A 196-amino-acid polypeptide reads, in one-letter code: Endoribonuclease YbeY (196 aa).

Residues H120, H124, and H130 each coordinate Zn(2+).

Belongs to the endoribonuclease YbeY family. Requires Zn(2+) as cofactor.

It is found in the cytoplasm. In terms of biological role, single strand-specific metallo-endoribonuclease involved in late-stage 70S ribosome quality control and in maturation of the 3' terminus of the 16S rRNA. This Corynebacterium glutamicum (strain ATCC 13032 / DSM 20300 / JCM 1318 / BCRC 11384 / CCUG 27702 / LMG 3730 / NBRC 12168 / NCIMB 10025 / NRRL B-2784 / 534) protein is Endoribonuclease YbeY.